The chain runs to 384 residues: Urotensin-2 receptor (384 aa).

The Extracellular portion of the chain corresponds to 1–54 (MALSPEPSSRFLVPATMGSAMPELPGAPNASLNSSLASPTEPNSLEDLVATGTI). 2 N-linked (GlcNAc...) asparagine glycosylation sites follow: Asn-29 and Asn-33. Residues 55–77 (GVVLSAMGVVGMAGNVYTLTVMC) traverse the membrane as a helical segment. Topologically, residues 78–87 (RFLHTSASMY) are cytoplasmic. A helical membrane pass occupies residues 88–113 (VYVINLALADLLYLLSIPFIVATYVT). Over 114–124 (KRWHFGDVGCR) the chain is Extracellular. A disulfide bridge links Cys-123 with Cys-199. The helical transmembrane segment at 125-146 (VLFSLDFLTMHASIFTLTLMSR) threads the bilayer. At 147-167 (ERYAAVVRPLDTVQRSKGYRK) the chain is on the cytoplasmic side. Residues 168–186 (VLALGTWLLALLLALPMML) traverse the membrane as a helical segment. At 187–209 (AIRLVRRGHKSLCLPAWGQRTHR) the chain is on the extracellular side. Residues 210–232 (AYLTLLFGTSIVGPGVVIGLLYV) form a helical membrane-spanning segment. Over 233-259 (RLARAYWLSQRSSFTQTRRLPNPRVLY) the chain is Cytoplasmic. The helical transmembrane segment at 260–285 (LILGIVLLFWACFLPFWLWQLLAQYR) threads the bilayer. The Extracellular portion of the chain corresponds to 286–299 (GAPPLAPRSARIVN). The helical transmembrane segment at 300 to 320 (YLTTCLTYGNSCVNPFLYTLL) threads the bilayer. The Cytoplasmic segment spans residues 321-384 (TKNYRDYRQR…SQAVPGSLCV (64 aa)).

It belongs to the G-protein coupled receptor 1 family. Expressed in neural tissue, including sensory epithelia.

It localises to the cell membrane. High affinity receptor for urotensin-2 and urotensin-2B. The activity of this receptor is mediated by a G-protein that activate a phosphatidylinositol-calcium second messenger system. This Bos taurus (Bovine) protein is Urotensin-2 receptor (UTS2R).